Reading from the N-terminus, the 717-residue chain is MAPNLHIKKAFMAMRAMGIEDARVKPVLKNLLALYEKNWELIAEDNYRVLADAIFDSHEDQAIQESEEKKADEVKEDEGCAAEVDRGKKKLHESIEDDEDVMAESDRPLKRLRRRGEGGSALASPSLGSPTLEGPSINDEENAPILLPYHPVPIENDHDAGELILTKVEPITNMPLSSIPDSVDRGDSSMLEIDKSNGHVEEKAGETVSTADGTTNDISPTTVARFSDHKLAATIEEPPALELASSASGEVKINLSFAPATGGSNPHLPSMEELRRAMEEKCLRSYKILDPNFSVLGFMNDICSCYLDLATNGRDSANQLPKNLPFVTTNIDALKKSAARMAYTSQASNDVVEICSNEHMRDAENGAVGDSMALVVVPECQLSADEWRLISSVGDISLGKETVEIPWVNEVNDKVPPVFHYIAQSLVYQDAAVKFSLGNIRDDQCCSSCCGDCLAPSMACRCATAFNGFAYTVDGLLQEDFLEQCISEARDPRKQMLLYCKECPLEKAKKEVILEPCKGHLKRKAIKECWSKCGCMKNCGNRVVQQGIHNKLQVFFTPNGRGWGLRTLEKLPKGAFVCELAGEILTIPELFQRISDRPTSPVILDAYWGSEDISGDDKALSLEGTHYGNISRFINHRCLDANLIEIPVHAETTDSHYYHLAFFTTREIDAMEELTWDYGVPFNQDVFPTSPFHCQCGSDFCRVRKQISKGKNVKKRA.

The span at 61-73 shows a compositional bias: basic and acidic residues; sequence QAIQESEEKKADE. Residues 61-136 are disordered; that stretch reads QAIQESEEKK…LGSPTLEGPS (76 aa). The span at 120 to 130 shows a compositional bias: low complexity; it reads SALASPSLGSP. C445, C446, C449, C453, C462, C529, C533, C535, and C539 together coordinate Zn(2+). Residues 458 to 547 enclose the Pre-SET domain; the sequence is MACRCATAFN…NCGNRVVQQG (90 aa). Positions 550 to 679 constitute an SET domain; it reads NKLQVFFTPN…AMEELTWDYG (130 aa). S-adenosyl-L-methionine-binding positions include 561 to 563 and 635 to 636; these read RGW and NH. A Zn(2+)-binding site is contributed by C638. Y678 contacts S-adenosyl-L-methionine. One can recognise a Post-SET domain in the interval 690-706; it reads SPFHCQCGSDFCRVRKQ. Zn(2+) contacts are provided by C694, C696, and C701.

This sequence belongs to the class V-like SAM-binding methyltransferase superfamily. Histone-lysine methyltransferase family. In terms of assembly, interacts with SUVR1, CHR19, CHR28 and itself. Interacts with CHR27.

Its subcellular location is the nucleus. It is found in the chromosome. Probable inactive histone-lysine methyltransferase that acts as regulator of transctiptional gene silencing independently of histone H3K9 methylation. Contributes to transcriptional gene silencing at RNA-directed DNA methylation (RdDM) target loci but also at RdDM-independent target loci. Forms a complex with SUVR1 and associates with the SNF2-related chromatin-remodeling proteins CHR19, CHR27, and CHR28, thereby mediating nucleosome positioning and transcriptional silencing. Does not possess histone-lysine methyltransferase activity in vitro, and the conserved catalytic sites of SUVR2 are dispensable for its function in transcriptional gene silencing. The protein is Probable inactive histone-lysine N-methyltransferase SUVR2 (SUVR2) of Arabidopsis thaliana (Mouse-ear cress).